The sequence spans 615 residues: Chaperone protein DnaK (615 aa).

Thr-174 carries the phosphothreonine; by autocatalysis modification. A disordered region spans residues 581–615 (QAAPKDGAEGDAKSADDNTVDGDFEEVDPNKDDKK). Positions 586-596 (DGAEGDAKSAD) are enriched in basic and acidic residues. Over residues 598-607 (NTVDGDFEEV) the composition is skewed to acidic residues.

This sequence belongs to the heat shock protein 70 family.

Its function is as follows. Acts as a chaperone. This is Chaperone protein DnaK from Leuconostoc mesenteroides subsp. mesenteroides (strain ATCC 8293 / DSM 20343 / BCRC 11652 / CCM 1803 / JCM 6124 / NCDO 523 / NBRC 100496 / NCIMB 8023 / NCTC 12954 / NRRL B-1118 / 37Y).